The chain runs to 326 residues: DNA repair protein RAD51 homolog 4 (326 aa).

The interval 1-83 (MGVLRAGLCP…ELKTSTAILS (83 aa)) is preferentially binds ssDNA. 107–114 (GAPGSGKT) serves as a coordination point for ATP.

Belongs to the RecA family. RAD51 subfamily. As to quaternary structure, part of the BCDX2 complex consisting of RAD51B, RAD51C, RAD51D and XRCC2; the complex has a ring-like structure arranged into a flat disc around a central channel. In the absence of DNA, the BCDX2 subcomplex XRCC2:RAD51D formed a multimeric ring structure; in the presence of single-stranded DNA it formed a filamentous structure with the ssDNA. Interacts with SWSAP1 and ZSWIM7; involved in homologous recombination repair. Interacts with BLM; required for stimulation of BLM activity by the BCDX2 subcomplex XRCC2:RAD51D.

The protein localises to the nucleus. In terms of biological role, involved in the homologous recombination repair (HRR) pathway of double-stranded DNA breaks arising during DNA replication or induced by DNA-damaging agents. Bind to single-stranded DNA (ssDNA) and has DNA-dependent ATPase activity. Part of the RAD51 paralog protein complex BCDX2 which acts in the BRCA1-BRCA2-dependent HR pathway. Upon DNA damage, BCDX2 acts downstream of BRCA2 recruitment and upstream of RAD51 recruitment. BCDX2 binds predominantly to the intersection of the four duplex arms of the Holliday junction and to junction of replication forks. The BCDX2 complex was originally reported to bind single-stranded DNA, single-stranded gaps in duplex DNA and specifically to nicks in duplex DNA. Involved in telomere maintenance. The BCDX2 subcomplex XRCC2:RAD51D can stimulate Holliday junction resolution by BLM. The chain is DNA repair protein RAD51 homolog 4 (RAD51D) from Bos taurus (Bovine).